The chain runs to 530 residues: Glucose-6-phosphate 1-dehydrogenase (530 aa).

Residues 53–60 (GASGDLAK), arginine 87, tyrosine 162, and lysine 186 contribute to the NADP(+) site. Residues lysine 186, 216–220 (HYLGK), glutamate 254, and aspartate 273 each bind D-glucose 6-phosphate. Catalysis depends on histidine 278, which acts as the Proton acceptor. Arginine 372 serves as a coordination point for NADP(+). 2 residues coordinate D-glucose 6-phosphate: lysine 375 and arginine 380. Residues lysine 381, arginine 385, and arginine 408 each coordinate NADP(+). Glutamine 410 is a D-glucose 6-phosphate binding site. Residues 416–418 (YAK), 436–438 (DLT), arginine 502, tyrosine 518, and tryptophan 524 each bind NADP(+).

This sequence belongs to the glucose-6-phosphate dehydrogenase family.

The protein localises to the cytoplasm. It localises to the cytosol. The enzyme catalyses D-glucose 6-phosphate + NADP(+) = 6-phospho-D-glucono-1,5-lactone + NADPH + H(+). Its pathway is carbohydrate degradation; pentose phosphate pathway; D-ribulose 5-phosphate from D-glucose 6-phosphate (oxidative stage): step 1/3. In terms of biological role, cytosolic glucose-6-phosphate dehydrogenase that catalyzes the first and rate-limiting step of the oxidative branch within the pentose phosphate pathway/shunt, an alternative route to glycolysis for the dissimilation of carbohydrates and a major source of reducing power and metabolic intermediates for fatty acid and nucleic acid biosynthetic processes. The protein is Glucose-6-phosphate 1-dehydrogenase (g6pd) of Takifugu rubripes (Japanese pufferfish).